A 416-amino-acid polypeptide reads, in one-letter code: Prostate tumor-overexpressed gene 1 protein (416 aa).

The tract at residues 1 to 53 is disordered; that stretch reads MVRPRRAPYRSGAGGPLGGRGRPPRPLVVRAVRSRSWPASPRGPQPPRIRARS. Residues 12–21 are compositionally biased toward gly residues; it reads GAGGPLGGRG. The span at 27–36 shows a compositional bias: low complexity; that stretch reads LVVRAVRSRS. The residue at position 53 (S53) is a Phosphoserine. Positions 184 to 416 are interaction with FLOT1; the sequence is NGFAGCMLFP…QEQQQRGMGG (233 aa).

Belongs to the Mediator complex subunit 25 family. PTOV1 subfamily. May interact with CREBBP. Interacts with FLOT1. In terms of processing, ubiquitinated by the CRL2(KLHDC2) complex, which recognizes the diglycine (Gly-Gly) at the C-terminus, leading to its degradation. Ubiquitinated by the CRL2(APPBP2) complex, which recognizes the Arg-Xaa-Xaa-Gly sequence at the C-terminus, leading to its degradation. Expressed in brain, heart, kidney, liver, placenta, skeletal muscle and small intestine.

The protein localises to the cytoplasm. Its subcellular location is the nucleus. It is found in the cell membrane. The protein resides in the perinuclear region. Functionally, may activate transcription. Required for nuclear translocation of FLOT1. Promotes cell proliferation. The sequence is that of Prostate tumor-overexpressed gene 1 protein (PTOV1) from Homo sapiens (Human).